Here is a 230-residue protein sequence, read N- to C-terminus: Fibronectin type III domain-containing protein 4 (230 aa).

Positions 1-40 (MPGCLPADSVGTMASLMPLSPYLSPTVLLLVSCDLGFVRA) are cleaved as a signal peptide. Residues 41–163 (DRPPSPVNVT…GLDGERPLQT (123 aa)) lie on the Extracellular side of the membrane. The region spanning 43–136 (PPSPVNVTVT…PRVHFRTLKG (94 aa)) is the Fibronectin type-III domain. N-linked (GlcNAc...) asparagine glycosylation is found at Asn48 and Asn143. Positions 118–156 (GLRGESPPGPRVHFRTLKGSDRLPSNSSSPGDITVEGLD) are disordered. The helical transmembrane segment at 164 to 184 (GEVVIIVVVLLMWAAVIGLFC) threads the bilayer. Residues 185–230 (RQYDIIKDNDSNNNPKEKGKGPEQSPQGRPVGTRQKKSPSINTIDV) are Cytoplasmic-facing. A compositionally biased stretch (basic and acidic residues) spans 193 to 205 (NDSNNNPKEKGKG). The interval 193–230 (NDSNNNPKEKGKGPEQSPQGRPVGTRQKKSPSINTIDV) is disordered.

The protein localises to the membrane. It is found in the secreted. Has anti-inflammatory properties. In the colon, acts on macrophages to down-regulate inflammation. May suppress osteoclastogenesis and mature osteoclast resorptive function. In white adipose tissue, decreases local inflammation, via interaction with GPR116. Also required for proper systemic glucose tolerance, specifically sensitizing white adipocytes to insulin and promoting glucose uptake. The insulin sensitizing function in adipose tissue is mediated by interaction with ADGRF5/GPR116 and activation of cAMP signaling. The protein is Fibronectin type III domain-containing protein 4 (FNDC4) of Bos taurus (Bovine).